The chain runs to 66 residues: Prophage transcriptional regulatory protein (66 aa).

In Escherichia coli (strain K12), this protein is Prophage transcriptional regulatory protein (croE).